The chain runs to 256 residues: uncharacterized protein (256 aa).

This is an uncharacterized protein from Escherichia coli (strain K12).